The primary structure comprises 380 residues: Cytochrome b (380 aa).

Transmembrane regions (helical) follow at residues 34–54, 78–99, 114–134, and 179–199; these read FGSLLGICLTTQILTGLLLAA, WLIRNLHANGASFFFICIYMHI, WNTGVILLLTLMATAFVGYVL, and FFTLHFLLPFMIMGLTLIHLT. Heme b contacts are provided by His84 and His98. Heme b-binding residues include His183 and His197. His202 contributes to the a ubiquinone binding site. The next 4 helical transmembrane spans lie at 227–247, 289–309, 321–341, and 348–368; these read LKDTLGFMLMFLPLMTLALFS, LGGVLALAASMLILFLAPLLH, LSQLLFWTLTANLLILTWVGS, and FIIIGQLASLTYFTILLILFP.

Belongs to the cytochrome b family. The cytochrome bc1 complex contains 11 subunits: 3 respiratory subunits (MT-CYB, CYC1 and UQCRFS1), 2 core proteins (UQCRC1 and UQCRC2) and 6 low-molecular weight proteins (UQCRH/QCR6, UQCRB/QCR7, UQCRQ/QCR8, UQCR10/QCR9, UQCR11/QCR10 and a cleavage product of UQCRFS1). This cytochrome bc1 complex then forms a dimer. It depends on heme b as a cofactor.

It is found in the mitochondrion inner membrane. Its function is as follows. Component of the ubiquinol-cytochrome c reductase complex (complex III or cytochrome b-c1 complex) that is part of the mitochondrial respiratory chain. The b-c1 complex mediates electron transfer from ubiquinol to cytochrome c. Contributes to the generation of a proton gradient across the mitochondrial membrane that is then used for ATP synthesis. This chain is Cytochrome b (MT-CYB), found in Balearica regulorum (Grey crowned-crane).